The primary structure comprises 503 residues: Maturase K (503 aa).

It belongs to the intron maturase 2 family. MatK subfamily.

The protein localises to the plastid. It is found in the chloroplast. Its function is as follows. Usually encoded in the trnK tRNA gene intron. Probably assists in splicing its own and other chloroplast group II introns. This is Maturase K from Psilotum nudum (Whisk fern).